The following is a 319-amino-acid chain: ATP-dependent 6-phosphofructokinase (319 aa).

G11 is an ATP binding site. 21 to 25 (RAVVR) contributes to the ADP binding site. ATP contacts are provided by residues 72-73 (RC) and 102-105 (GEGS). Residue E103 participates in Mg(2+) binding. 126 to 128 (TID) is a substrate binding site. D128 serves as the catalytic Proton acceptor. Residue K155 participates in ADP binding. Residues R163 and 170-172 (MGR) contribute to the substrate site. ADP-binding positions include 186 to 188 (GAE), R212, and 214 to 216 (KIN). Substrate-binding positions include E223, R244, and 250-253 (HVQR).

Belongs to the phosphofructokinase type A (PFKA) family. ATP-dependent PFK group I subfamily. Prokaryotic clade 'B1' sub-subfamily. As to quaternary structure, homotetramer. Requires Mg(2+) as cofactor.

The protein resides in the cytoplasm. The catalysed reaction is beta-D-fructose 6-phosphate + ATP = beta-D-fructose 1,6-bisphosphate + ADP + H(+). The protein operates within carbohydrate degradation; glycolysis; D-glyceraldehyde 3-phosphate and glycerone phosphate from D-glucose: step 3/4. Allosterically activated by ADP and other diphosphonucleosides, and allosterically inhibited by phosphoenolpyruvate. Functionally, catalyzes the phosphorylation of D-fructose 6-phosphate to fructose 1,6-bisphosphate by ATP, the first committing step of glycolysis. The chain is ATP-dependent 6-phosphofructokinase from Thermotoga petrophila (strain ATCC BAA-488 / DSM 13995 / JCM 10881 / RKU-1).